The chain runs to 552 residues: Scavenger receptor class B member 1 (552 aa).

Residues 1–11 (MGCSAKARWAA) lie on the Cytoplasmic side of the membrane. The helical transmembrane segment at 12 to 32 (GALGVAGLLCAVLGAVMIVMV) threads the bilayer. Topologically, residues 33 to 443 (PSLIKQQVLK…LVLMPKVMHY (411 aa)) are extracellular. Asn102, Asn108, Asn173, Asn212, Asn227, Asn255, Asn310, Asn330, and Asn383 each carry an N-linked (GlcNAc...) asparagine glycan. A disulfide bridge connects residues Cys251 and Cys384. Tyr393 and Val458 each carry phosphoserine. Residues 444-464 (AQYVLLALGCVLLLVPVICQI) traverse the membrane as a helical segment. A lipid anchor (S-palmitoyl cysteine) is attached at Cys462. Residues 465–552 (RSQVGAGQRA…GPSLGGGTGS (88 aa)) are Cytoplasmic-facing. Thr493 is modified (phosphoserine).

This sequence belongs to the CD36 family. As to quaternary structure, the C-terminal region binds to PDZK1. (Microbial infection) Interacts with hepatitis C virus E1:E2 glycoproteins. In terms of processing, N-glycosylated. The six cysteines of the extracellular domain are all involved in intramolecular disulfide bonds. As to expression, widely expressed.

It localises to the cell membrane. The protein localises to the membrane. The protein resides in the caveola. Receptor for different ligands such as phospholipids, cholesterol ester, lipoproteins, phosphatidylserine and apoptotic cells. Receptor for HDL, mediating selective uptake of cholesteryl ether and HDL-dependent cholesterol efflux. Also facilitates the flux of free and esterified cholesterol between the cell surface and apoB-containing lipoproteins and modified lipoproteins, although less efficiently than HDL. May be involved in the phagocytosis of apoptotic cells, via its phosphatidylserine binding activity. Its function is as follows. (Microbial infection) Acts as a receptor for hepatitis C virus in hepatocytes and appears to facilitate its cell entry. Binding between SCARB1 and the hepatitis C virus glycoprotein E2 is independent of the genotype of the viral isolate. In terms of biological role, (Microbial infection) Mediates uptake of M.fortuitum, E.coli and S.aureus. Functionally, (Microbial infection) Facilitates the entry of human coronavirus SARS-CoV-2 by acting as an entry cofactor through HDL binding. The chain is Scavenger receptor class B member 1 (SCARB1) from Homo sapiens (Human).